Reading from the N-terminus, the 85-residue chain is ATP synthase subunit c (85 aa).

Helical transmembrane passes span 10–30 and 53–73; these read IAVG…FAIL and FIIA…ALLF.

Belongs to the ATPase C chain family. In terms of assembly, F-type ATPases have 2 components, F(1) - the catalytic core - and F(0) - the membrane proton channel. F(1) has five subunits: alpha(3), beta(3), gamma(1), delta(1), epsilon(1). F(0) has three main subunits: a(1), b(2) and c(10-14). The alpha and beta chains form an alternating ring which encloses part of the gamma chain. F(1) is attached to F(0) by a central stalk formed by the gamma and epsilon chains, while a peripheral stalk is formed by the delta and b chains.

The protein resides in the cell inner membrane. Functionally, f(1)F(0) ATP synthase produces ATP from ADP in the presence of a proton or sodium gradient. F-type ATPases consist of two structural domains, F(1) containing the extramembraneous catalytic core and F(0) containing the membrane proton channel, linked together by a central stalk and a peripheral stalk. During catalysis, ATP synthesis in the catalytic domain of F(1) is coupled via a rotary mechanism of the central stalk subunits to proton translocation. In terms of biological role, key component of the F(0) channel; it plays a direct role in translocation across the membrane. A homomeric c-ring of between 10-14 subunits forms the central stalk rotor element with the F(1) delta and epsilon subunits. This chain is ATP synthase subunit c, found in Aliivibrio salmonicida (strain LFI1238) (Vibrio salmonicida (strain LFI1238)).